A 246-amino-acid chain; its full sequence is MKKILAEIAYDGSIYHGFQIQPTKPTVQGEIEKALMKINKKKVKIHSSGRTDKGVHAKKQIITFDIKINIQLNNLKKALNAILLKNSIKILKLRYVKNSFHPRFSAQKRKYSYCILNSDNYYPWEGYQAHYVNKKLSISNLNQMAKTLIGKHDFTTFSCIKDKSKSKFRHIYFAKFKKRGKYIIFEIIGSSFLWKMVRSIIGTMLDIEIKNESISTFETILKSKNRNLARTTAPANALFLERVYYE.

D52 functions as the Nucleophile in the catalytic mechanism. Y111 is a binding site for substrate.

Belongs to the tRNA pseudouridine synthase TruA family. In terms of assembly, homodimer.

The catalysed reaction is uridine(38/39/40) in tRNA = pseudouridine(38/39/40) in tRNA. In terms of biological role, formation of pseudouridine at positions 38, 39 and 40 in the anticodon stem and loop of transfer RNAs. The sequence is that of tRNA pseudouridine synthase A from Borreliella burgdorferi (strain ATCC 35210 / DSM 4680 / CIP 102532 / B31) (Borrelia burgdorferi).